The primary structure comprises 153 residues: Bud site selection protein 25 (153 aa).

Its function is as follows. Involved in bud site selection. Required for resistance to the DNA-damaging agent methyl methanesulfonate (MMS). The protein is Bud site selection protein 25 of Saccharomyces cerevisiae (strain ATCC 204508 / S288c) (Baker's yeast).